Here is a 415-residue protein sequence, read N- to C-terminus: Multifunctional CCA protein (415 aa).

2 residues coordinate ATP: Gly-8 and Arg-11. Residues Gly-8 and Arg-11 each coordinate CTP. Mg(2+)-binding residues include Asp-21 and Asp-23. Residues Arg-91, Arg-143, and Arg-146 each coordinate ATP. Positions 91, 143, and 146 each coordinate CTP. Residues 232–333 (TGVHVMMVID…VRLLERCDAL (102 aa)) form the HD domain.

Belongs to the tRNA nucleotidyltransferase/poly(A) polymerase family. Bacterial CCA-adding enzyme type 1 subfamily. In terms of assembly, monomer. Can also form homodimers and oligomers. The cofactor is Mg(2+). Ni(2+) is required as a cofactor.

The catalysed reaction is a tRNA precursor + 2 CTP + ATP = a tRNA with a 3' CCA end + 3 diphosphate. The enzyme catalyses a tRNA with a 3' CCA end + 2 CTP + ATP = a tRNA with a 3' CCACCA end + 3 diphosphate. Functionally, catalyzes the addition and repair of the essential 3'-terminal CCA sequence in tRNAs without using a nucleic acid template. Adds these three nucleotides in the order of C, C, and A to the tRNA nucleotide-73, using CTP and ATP as substrates and producing inorganic pyrophosphate. tRNA 3'-terminal CCA addition is required both for tRNA processing and repair. Also involved in tRNA surveillance by mediating tandem CCA addition to generate a CCACCA at the 3' terminus of unstable tRNAs. While stable tRNAs receive only 3'-terminal CCA, unstable tRNAs are marked with CCACCA and rapidly degraded. This chain is Multifunctional CCA protein, found in Cupriavidus taiwanensis (strain DSM 17343 / BCRC 17206 / CCUG 44338 / CIP 107171 / LMG 19424 / R1) (Ralstonia taiwanensis (strain LMG 19424)).